Here is a 319-residue protein sequence, read N- to C-terminus: Beta-ketoacyl-[acyl-carrier-protein] synthase III (319 aa).

Catalysis depends on residues cysteine 113 and histidine 246. An ACP-binding region spans residues 247 to 251 (QANLR). Asparagine 276 is a catalytic residue.

Belongs to the thiolase-like superfamily. FabH family. In terms of assembly, homodimer.

It is found in the cytoplasm. The catalysed reaction is malonyl-[ACP] + acetyl-CoA + H(+) = 3-oxobutanoyl-[ACP] + CO2 + CoA. Its pathway is lipid metabolism; fatty acid biosynthesis. Its function is as follows. Catalyzes the condensation reaction of fatty acid synthesis by the addition to an acyl acceptor of two carbons from malonyl-ACP. Catalyzes the first condensation reaction which initiates fatty acid synthesis and may therefore play a role in governing the total rate of fatty acid production. Possesses both acetoacetyl-ACP synthase and acetyl transacylase activities. Its substrate specificity determines the biosynthesis of branched-chain and/or straight-chain of fatty acids. This chain is Beta-ketoacyl-[acyl-carrier-protein] synthase III, found in Chromobacterium violaceum (strain ATCC 12472 / DSM 30191 / JCM 1249 / CCUG 213 / NBRC 12614 / NCIMB 9131 / NCTC 9757 / MK).